A 485-amino-acid chain; its full sequence is UDP-N-acetylmuramate--L-alanine ligase (485 aa).

Gly127 to Thr133 serves as a coordination point for ATP.

The protein belongs to the MurCDEF family.

The protein localises to the cytoplasm. The enzyme catalyses UDP-N-acetyl-alpha-D-muramate + L-alanine + ATP = UDP-N-acetyl-alpha-D-muramoyl-L-alanine + ADP + phosphate + H(+). The protein operates within cell wall biogenesis; peptidoglycan biosynthesis. Cell wall formation. This Shewanella frigidimarina (strain NCIMB 400) protein is UDP-N-acetylmuramate--L-alanine ligase.